The sequence spans 708 residues: Ion-translocating oxidoreductase complex subunit C (708 aa).

4Fe-4S ferredoxin-type domains follow at residues 369–397 and 407–436; these read GEPQ…QQLY and KATT…VQYF. The [4Fe-4S] cluster site is built by cysteine 377, cysteine 380, cysteine 383, cysteine 387, cysteine 416, cysteine 419, cysteine 422, and cysteine 426. The disordered stretch occupies residues 599 to 686; that stretch reads KARKLEQQQS…EEQVDPRKAA (88 aa).

The protein belongs to the 4Fe4S bacterial-type ferredoxin family. RnfC subfamily. As to quaternary structure, the complex is composed of six subunits: RsxA, RsxB, RsxC, RsxD, RsxE and RsxG. The cofactor is [4Fe-4S] cluster.

It localises to the cell inner membrane. Its function is as follows. Part of a membrane-bound complex that couples electron transfer with translocation of ions across the membrane. Required to maintain the reduced state of SoxR. The sequence is that of Ion-translocating oxidoreductase complex subunit C from Escherichia coli (strain 55989 / EAEC).